The chain runs to 273 residues: MDFIELLKVIFLGIVEGITEWLPISSTGHLLLVDEFLKVNLSKDFMSMFNVVIQLGAILAVVVLFFKKLWPFSKEEKNFIKKDTFTLWFKIVVACIPGIVMIPFDSKIEDLFFNPQTIATTLILYGILFIIIENRNAGKQPKVAKLSDITYQMAFMIGLFQILAMIPGTSRSGATIIGAMLFGASRYVAAEFTFFLAIPTMFGASLLKLLKFGFTFTGAEIVALITGMLTAFIVSIIVIKFLMGYIKKNNFKVFGWYRIVLGAIVAGYFLLAR.

Transmembrane regions (helical) follow at residues 4 to 24 (IELLKVIFLGIVEGITEWLPI), 45 to 65 (FMSMFNVVIQLGAILAVVVLF), 84 to 104 (TFTLWFKIVVACIPGIVMIPF), 112 to 132 (FFNPQTIATTLILYGILFIII), 149 to 169 (ITYQMAFMIGLFQILAMIPGT), 187 to 207 (YVAAEFTFFLAIPTMFGASLL), 219 to 239 (AEIVALITGMLTAFIVSIIVI), and 251 to 271 (FKVFGWYRIVLGAIVAGYFLL).

The protein belongs to the UppP family.

It is found in the cell membrane. It carries out the reaction di-trans,octa-cis-undecaprenyl diphosphate + H2O = di-trans,octa-cis-undecaprenyl phosphate + phosphate + H(+). Functionally, catalyzes the dephosphorylation of undecaprenyl diphosphate (UPP). Confers resistance to bacitracin. The protein is Undecaprenyl-diphosphatase of Lachnoclostridium phytofermentans (strain ATCC 700394 / DSM 18823 / ISDg) (Clostridium phytofermentans).